A 128-amino-acid polypeptide reads, in one-letter code: Small ribosomal subunit protein eS8 (128 aa).

Belongs to the eukaryotic ribosomal protein eS8 family. Part of the 30S ribosomal subunit.

The polypeptide is Small ribosomal subunit protein eS8 (Metallosphaera sedula (strain ATCC 51363 / DSM 5348 / JCM 9185 / NBRC 15509 / TH2)).